The sequence spans 115 residues: NAD(P)H-quinone oxidoreductase subunit M (115 aa).

The protein belongs to the complex I NdhM subunit family. NDH-1 can be composed of about 15 different subunits; different subcomplexes with different compositions have been identified which probably have different functions.

The protein resides in the cellular thylakoid membrane. It carries out the reaction a plastoquinone + NADH + (n+1) H(+)(in) = a plastoquinol + NAD(+) + n H(+)(out). The enzyme catalyses a plastoquinone + NADPH + (n+1) H(+)(in) = a plastoquinol + NADP(+) + n H(+)(out). Functionally, NDH-1 shuttles electrons from an unknown electron donor, via FMN and iron-sulfur (Fe-S) centers, to quinones in the respiratory and/or the photosynthetic chain. The immediate electron acceptor for the enzyme in this species is believed to be plastoquinone. Couples the redox reaction to proton translocation, and thus conserves the redox energy in a proton gradient. Cyanobacterial NDH-1 also plays a role in inorganic carbon-concentration. The chain is NAD(P)H-quinone oxidoreductase subunit M from Prochlorococcus marinus (strain MIT 9313).